The sequence spans 59 residues: Large ribosomal subunit protein bL32 (59 aa).

The disordered stretch occupies residues 1–59 (MAVQQNKKSPSKRGMHRSHDALTAPALSVDSTTGEVHRPHHISPNGMYRGRKVVKVKGE). The span at 49 to 59 (RGRKVVKVKGE) shows a compositional bias: basic residues.

Belongs to the bacterial ribosomal protein bL32 family.

The polypeptide is Large ribosomal subunit protein bL32 (rpmF) (Neisseria meningitidis serogroup A / serotype 4A (strain DSM 15465 / Z2491)).